Consider the following 203-residue polypeptide: Holliday junction branch migration complex subunit RuvA (203 aa).

Positions 1–64 are domain I; the sequence is MIGRLRGIVL…EDAQLLFGFN (64 aa). A domain II region spans residues 65–142; it reads NKQERTLFRE…KGLHGDLFTP (78 aa). The flexible linker stretch occupies residues 143 to 154; sequence AADLVLTSPASP. Residues 155–203 form a domain III region; sequence AVDDAEAEAVAALVSLGYKPQEASRMVSKVAQADASSETLIREALRAAL.

The protein belongs to the RuvA family. As to quaternary structure, homotetramer. Forms an RuvA(8)-RuvB(12)-Holliday junction (HJ) complex. HJ DNA is sandwiched between 2 RuvA tetramers; dsDNA enters through RuvA and exits via RuvB. An RuvB hexamer assembles on each DNA strand where it exits the tetramer. Each RuvB hexamer is contacted by two RuvA subunits (via domain III) on 2 adjacent RuvB subunits; this complex drives branch migration. In the full resolvosome a probable DNA-RuvA(4)-RuvB(12)-RuvC(2) complex forms which resolves the HJ.

It localises to the cytoplasm. The RuvA-RuvB-RuvC complex processes Holliday junction (HJ) DNA during genetic recombination and DNA repair, while the RuvA-RuvB complex plays an important role in the rescue of blocked DNA replication forks via replication fork reversal (RFR). RuvA specifically binds to HJ cruciform DNA, conferring on it an open structure. The RuvB hexamer acts as an ATP-dependent pump, pulling dsDNA into and through the RuvAB complex. HJ branch migration allows RuvC to scan DNA until it finds its consensus sequence, where it cleaves and resolves the cruciform DNA. This is Holliday junction branch migration complex subunit RuvA from Cronobacter sakazakii (strain ATCC BAA-894) (Enterobacter sakazakii).